The primary structure comprises 158 residues: Ribosome maturation factor RimP (158 aa).

It belongs to the RimP family.

Its subcellular location is the cytoplasm. Functionally, required for maturation of 30S ribosomal subunits. The polypeptide is Ribosome maturation factor RimP (Aquifex aeolicus (strain VF5)).